A 186-amino-acid chain; its full sequence is Tetratricopeptide repeat protein 36 (186 aa).

TPR repeat units lie at residues 48–81 (SKALELQGVRAAEAGDLHTALEKFGQAISLLPDR), 83–115 (SAYNNRAQARRLQGDVAGALEDLERAVTLSGGR), and 120–153 (RQSFVQSGLLARFQGRDDDARRDFEKAARLGSPF).

This sequence belongs to the TTC36 family.

This Mus musculus (Mouse) protein is Tetratricopeptide repeat protein 36 (Ttc36).